Here is a 113-residue protein sequence, read N- to C-terminus: Hydrogenase maturation factor HypA (113 aa).

H2 contacts Ni(2+). 4 residues coordinate Zn(2+): C73, C76, C89, and C92.

The protein belongs to the HypA/HybF family.

Functionally, involved in the maturation of [NiFe] hydrogenases. Required for nickel insertion into the metal center of the hydrogenase. The polypeptide is Hydrogenase maturation factor HypA (Legionella pneumophila (strain Paris)).